The following is a 224-amino-acid chain: 3-dehydroquinate dehydratase (224 aa).

Residues 30 to 32 (EWR) and Arg62 contribute to the 3-dehydroquinate site. His118 (proton donor/acceptor) is an active-site residue. The Schiff-base intermediate with substrate role is filled by Lys143. 3-dehydroquinate-binding residues include Arg186, Ser205, and Gln209.

This sequence belongs to the type-I 3-dehydroquinase family. Homodimer.

It catalyses the reaction 3-dehydroquinate = 3-dehydroshikimate + H2O. It participates in metabolic intermediate biosynthesis; chorismate biosynthesis; chorismate from D-erythrose 4-phosphate and phosphoenolpyruvate: step 3/7. Its function is as follows. Involved in the third step of the chorismate pathway, which leads to the biosynthesis of aromatic amino acids. Catalyzes the cis-dehydration of 3-dehydroquinate (DHQ) and introduces the first double bond of the aromatic ring to yield 3-dehydroshikimate. The protein is 3-dehydroquinate dehydratase of Streptococcus suis (strain 98HAH33).